A 228-amino-acid chain; its full sequence is Cytochrome c oxidase subunit 2 (228 aa).

Residues methionine 1–histidine 26 are Mitochondrial intermembrane-facing. Residues threonine 27–asparagine 48 traverse the membrane as a helical segment. The Mitochondrial matrix portion of the chain corresponds to lysine 49–glutamate 62. The chain crosses the membrane as a helical span at residues isoleucine 63 to arginine 82. At leucine 83–asparagine 228 the chain is on the mitochondrial intermembrane side. Positions 161, 196, 198, 200, 204, and 207 each coordinate Cu cation. Residue glutamate 198 participates in Mg(2+) binding.

Belongs to the cytochrome c oxidase subunit 2 family. Component of the cytochrome c oxidase (complex IV, CIV), a multisubunit enzyme composed of a catalytic core of 3 subunits and several supernumerary subunits. The complex exists as a monomer or a dimer and forms supercomplexes (SCs) in the inner mitochondrial membrane with ubiquinol-cytochrome c oxidoreductase (cytochrome b-c1 complex, complex III, CIII). Cu cation is required as a cofactor.

The protein resides in the mitochondrion inner membrane. The catalysed reaction is 4 Fe(II)-[cytochrome c] + O2 + 8 H(+)(in) = 4 Fe(III)-[cytochrome c] + 2 H2O + 4 H(+)(out). In terms of biological role, component of the cytochrome c oxidase, the last enzyme in the mitochondrial electron transport chain which drives oxidative phosphorylation. The respiratory chain contains 3 multisubunit complexes succinate dehydrogenase (complex II, CII), ubiquinol-cytochrome c oxidoreductase (cytochrome b-c1 complex, complex III, CIII) and cytochrome c oxidase (complex IV, CIV), that cooperate to transfer electrons derived from NADH and succinate to molecular oxygen, creating an electrochemical gradient over the inner membrane that drives transmembrane transport and the ATP synthase. Cytochrome c oxidase is the component of the respiratory chain that catalyzes the reduction of oxygen to water. Electrons originating from reduced cytochrome c in the intermembrane space (IMS) are transferred via the dinuclear copper A center (CU(A)) of subunit 2 and heme A of subunit 1 to the active site in subunit 1, a binuclear center (BNC) formed by heme A3 and copper B (CU(B)). The BNC reduces molecular oxygen to 2 water molecules using 4 electrons from cytochrome c in the IMS and 4 protons from the mitochondrial matrix. The polypeptide is Cytochrome c oxidase subunit 2 (COII) (Culex quinquefasciatus (Southern house mosquito)).